The chain runs to 248 residues: 4-hydroxy-tetrahydrodipicolinate reductase (248 aa).

Gly13 to Leu18 serves as a coordination point for NAD(+). Residue Arg36 participates in NADP(+) binding. Residues Gly84–Thr86 and Ala108–Phe111 each bind NAD(+). His140 serves as the catalytic Proton donor/acceptor. His141 serves as a coordination point for (S)-2,3,4,5-tetrahydrodipicolinate. Catalysis depends on Lys144, which acts as the Proton donor. A (S)-2,3,4,5-tetrahydrodipicolinate-binding site is contributed by Gly150–Thr151.

The protein belongs to the DapB family.

It is found in the cytoplasm. It catalyses the reaction (S)-2,3,4,5-tetrahydrodipicolinate + NAD(+) + H2O = (2S,4S)-4-hydroxy-2,3,4,5-tetrahydrodipicolinate + NADH + H(+). It carries out the reaction (S)-2,3,4,5-tetrahydrodipicolinate + NADP(+) + H2O = (2S,4S)-4-hydroxy-2,3,4,5-tetrahydrodipicolinate + NADPH + H(+). Its pathway is amino-acid biosynthesis; L-lysine biosynthesis via DAP pathway; (S)-tetrahydrodipicolinate from L-aspartate: step 4/4. Its function is as follows. Catalyzes the conversion of 4-hydroxy-tetrahydrodipicolinate (HTPA) to tetrahydrodipicolinate. The chain is 4-hydroxy-tetrahydrodipicolinate reductase from Gluconobacter oxydans (strain 621H) (Gluconobacter suboxydans).